Here is a 49-residue protein sequence, read N- to C-terminus: U1-theraphotoxin-Lp1b (49 aa).

4 disulfides stabilise this stretch: Cys4/Cys17, Cys8/Cys41, Cys22/Cys24, and Cys35/Cys46.

Expressed by the venom gland.

Its subcellular location is the secreted. In terms of biological role, toxin that causes irreversible contractile paralysis into adult Aedes aegypti resulting in 100% mortality after 24 hours. The sequence is that of U1-theraphotoxin-Lp1b from Lasiodora parahybana (Brazilian salmon pink birdeater).